We begin with the raw amino-acid sequence, 350 residues long: MSKNKLSKGQQRRVNANHQRRLKTSKEKPDYDDNLFGEPDEGIVISRFGMHADVESADGDVHRCNIRRTIRSLVTGDRVVWRPGKPAAEGVNVKGIVEAVHERTSVLTRPDFYDGVKPIAANIDQIVIVSAILPELSLNIIDRYLVACETLQIEPIIVLNKIDLLDDEGMAFVNEQMDIYRNIGYRVLMVSSHTQDGLKPLEEALTGRISIFAGQSGVGKSSLLNALLGLQKEILTNDISDNSGLGQHTTTAARLYHFPHGGDVIDSPGVREFGLWHLEPEQITQGFVEFHDYLGLCKYRDCKHDTDPGCAIREAVEEGKIAETRFENYHRILESMAQVKTRKNFSDTDD.

Positions 1–17 (MSKNKLSKGQQRRVNAN) are enriched in polar residues. The tract at residues 1–33 (MSKNKLSKGQQRRVNANHQRRLKTSKEKPDYDD) is disordered. In terms of domain architecture, CP-type G spans 104–273 (TSVLTRPDFY…VIDSPGVREF (170 aa)). GTP is bound by residues 160–163 (NKID) and 214–222 (GQSGVGKSS). 4 residues coordinate Zn(2+): cysteine 297, cysteine 302, histidine 304, and cysteine 310.

The protein belongs to the TRAFAC class YlqF/YawG GTPase family. RsgA subfamily. Monomer. Associates with 30S ribosomal subunit, binds 16S rRNA. Zn(2+) serves as cofactor.

The protein resides in the cytoplasm. Functionally, one of several proteins that assist in the late maturation steps of the functional core of the 30S ribosomal subunit. Helps release RbfA from mature subunits. May play a role in the assembly of ribosomal proteins into the subunit. Circularly permuted GTPase that catalyzes slow GTP hydrolysis, GTPase activity is stimulated by the 30S ribosomal subunit. This chain is Small ribosomal subunit biogenesis GTPase RsgA, found in Escherichia coli (strain ATCC 8739 / DSM 1576 / NBRC 3972 / NCIMB 8545 / WDCM 00012 / Crooks).